The sequence spans 88 residues: LYR motif-containing protein 2 (88 aa).

Residues 1–19 constitute a mitochondrion transit peptide; it reads MAASRLPPATLTLKQFMRR.

Belongs to the complex I LYR family.

It is found in the mitochondrion. Its function is as follows. Involved in efficient integration of the N-module into mitochondrial respiratory chain complex I. The protein is LYR motif-containing protein 2 (Lyrm2) of Rattus norvegicus (Rat).